Consider the following 76-residue polypeptide: Small proline-rich protein 2F (76 aa).

A run of 3 repeats spans residues 21-29, 30-38, and 39-47. A 3 X 9 AA approximate tandem repeats region spans residues 21–47; sequence PKCPEPCSPSVCPEPCPPPKCPEPCPE. The interval 53-76 is disordered; it reads SFQQKCPPVQPPPPCQQKCPPKSK.

Belongs to the cornifin (SPRR) family. Expressed in uterus.

It localises to the cytoplasm. Cross-linked envelope protein of keratinocytes. It is a keratinocyte protein that first appears in the cell cytosol, but ultimately becomes cross-linked to membrane proteins by transglutaminase. All that results in the formation of an insoluble envelope beneath the plasma membrane. The polypeptide is Small proline-rich protein 2F (Sprr2f) (Mus musculus (Mouse)).